The sequence spans 356 residues: 7,8-didemethyl-8-hydroxy-5-deazariboflavin synthase (356 aa).

Positions 40-280 constitute a Radical SAM core domain; it reads ITYSKNVFIP…KDISIQVPPN (241 aa). [4Fe-4S] cluster is bound by residues Cys-54, Cys-58, and Cys-61.

It belongs to the radical SAM superfamily. CofG family. As to quaternary structure, consists of two subunits, CofG and CofH. [4Fe-4S] cluster is required as a cofactor.

The enzyme catalyses 5-amino-5-(4-hydroxybenzyl)-6-(D-ribitylimino)-5,6-dihydrouracil + S-adenosyl-L-methionine = 7,8-didemethyl-8-hydroxy-5-deazariboflavin + 5'-deoxyadenosine + L-methionine + NH4(+) + H(+). It functions in the pathway cofactor biosynthesis; coenzyme F0 biosynthesis. Functionally, catalyzes the radical-mediated synthesis of 7,8-didemethyl-8-hydroxy-5-deazariboflavin from 5-amino-5-(4-hydroxybenzyl)-6-(D-ribitylimino)-5,6-dihydrouracil. The chain is 7,8-didemethyl-8-hydroxy-5-deazariboflavin synthase from Methanococcus aeolicus (strain ATCC BAA-1280 / DSM 17508 / OCM 812 / Nankai-3).